A 135-amino-acid polypeptide reads, in one-letter code: Putative nickel-responsive regulator (135 aa).

4 residues coordinate Ni(2+): histidine 79, histidine 90, histidine 92, and cysteine 98.

This sequence belongs to the transcriptional regulatory CopG/NikR family. The cofactor is Ni(2+).

In terms of biological role, transcriptional regulator. The sequence is that of Putative nickel-responsive regulator from Dictyoglomus turgidum (strain DSM 6724 / Z-1310).